The following is a 1434-amino-acid chain: Probable ATP-dependent DNA helicase HFM1 (1434 aa).

The Helicase ATP-binding domain maps to 289–476; it reads DDLLYTDRNF…WLSDGERPAV (188 aa). ATP is bound at residue 302 to 309; the sequence is APTGSGKT. A DEAH box motif is present at residues 410 to 413; it reads DEVH. The 205-residue stretch at 514–718 folds into the Helicase C-terminal domain; that stretch reads KVYSVIRTYS…DVNIALDWIR (205 aa). An SEC63 domain is found at 775-1089; that stretch reads PTEAGRLMAW…VGLDIHQKFT (315 aa). A disordered region spans residues 1110–1130; sequence TDISHSDYSGRATATGSSKGM. The segment at 1141–1156 adopts a C4-type zinc-finger fold; that stretch reads CHHHCKNKHACGHDCC. Positions 1294–1333 are disordered; sequence GFGDTRDSSLGGSKLPFQKSSSRFQRDNSNSFASSPGKPD. Residues 1311 to 1327 show a composition bias toward polar residues; it reads QKSSSRFQRDNSNSFAS.

This sequence belongs to the helicase family. SKI2 subfamily. Zn(2+) is required as a cofactor.

It catalyses the reaction Couples ATP hydrolysis with the unwinding of duplex DNA by translocating in the 3'-5' direction.. The enzyme catalyses ATP + H2O = ADP + phosphate + H(+). Functionally, required for crossover formation and complete synapsis of homologous chromosomes during meiosis. The sequence is that of Probable ATP-dependent DNA helicase HFM1 from Mus musculus (Mouse).